The chain runs to 693 residues: Elongation factor G (693 aa).

The tr-type G domain maps to 8-283; that stretch reads NRIRNIGIAA…AVIDYLPAPT (276 aa). Residues 17–24, 81–85, and 135–138 each bind GTP; these read AHIDAGKT, DTPGH, and NKMD.

This sequence belongs to the TRAFAC class translation factor GTPase superfamily. Classic translation factor GTPase family. EF-G/EF-2 subfamily.

Its subcellular location is the cytoplasm. In terms of biological role, catalyzes the GTP-dependent ribosomal translocation step during translation elongation. During this step, the ribosome changes from the pre-translocational (PRE) to the post-translocational (POST) state as the newly formed A-site-bound peptidyl-tRNA and P-site-bound deacylated tRNA move to the P and E sites, respectively. Catalyzes the coordinated movement of the two tRNA molecules, the mRNA and conformational changes in the ribosome. The protein is Elongation factor G of Wolinella succinogenes (strain ATCC 29543 / DSM 1740 / CCUG 13145 / JCM 31913 / LMG 7466 / NCTC 11488 / FDC 602W) (Vibrio succinogenes).